Reading from the N-terminus, the 372-residue chain is Citrate/2-methylcitrate synthase (372 aa).

A substrate-binding site is contributed by His-188. His-223 is a catalytic residue. 256–260 serves as a coordination point for CoA; it reads KIMGF. The active site involves His-262. Arg-272 provides a ligand contact to substrate. Residue Asp-314 is part of the active site. Substrate is bound by residues Arg-339 and Arg-358.

It belongs to the citrate synthase family.

It carries out the reaction propanoyl-CoA + oxaloacetate + H2O = 2-methylcitrate + CoA + H(+). It catalyses the reaction oxaloacetate + acetyl-CoA + H2O = citrate + CoA + H(+). It participates in carbohydrate metabolism; tricarboxylic acid cycle; isocitrate from oxaloacetate: step 1/2. Its function is as follows. Involved in both the tricarboxylic acid (TCA) and methylcitric acid cycles. Has both 2-methylcitrate synthase and citrate synthase activities. Catalyzes the condensation of propionyl-CoA and oxaloacetate to yield 2-methylcitrate (2-MC) and CoA, and the condensation of acetyl-CoA and oxaloacetate to yield citrate and CoA. Has 2.3-fold higher activity as a 2-methylcitrate synthase. Catalyzes the formation of either (2S,3R)- or (2R,3S)-2-methylcitrate. This is Citrate/2-methylcitrate synthase from Bacillus subtilis (strain 168).